The chain runs to 141 residues: MAKKITGFIKLQIPAGGANPAPPVGPALGQKGVNIMEFCKQFNAKTQSEAGMIIPVVITVYSDKSFTFVTKTPPAAVLLLKEAKLQKGSGEPNRNKVGTVTMDQVRKIAELKRPDLNSIDLEGATQMVIGTARSMGIVVEG.

It belongs to the universal ribosomal protein uL11 family. In terms of assembly, part of the ribosomal stalk of the 50S ribosomal subunit. Interacts with L10 and the large rRNA to form the base of the stalk. L10 forms an elongated spine to which L12 dimers bind in a sequential fashion forming a multimeric L10(L12)X complex. In terms of processing, one or more lysine residues are methylated.

Functionally, forms part of the ribosomal stalk which helps the ribosome interact with GTP-bound translation factors. This chain is Large ribosomal subunit protein uL11, found in Chlorobaculum tepidum (strain ATCC 49652 / DSM 12025 / NBRC 103806 / TLS) (Chlorobium tepidum).